Consider the following 585-residue polypeptide: Poly(A) RNA polymerase, mitochondrial (585 aa).

The N-terminal 37 residues, 1-37 (MAARGVGLLTRLPVCSQRRNRIPRSISRLLSCPGTIA), are a transit peptide targeting the mitochondrion. Lys-90 carries the N6-acetyllysine modification. Residues 107–109 (YES) and 244–245 (GC) each bind ATP. 2 residues coordinate Mg(2+): Asp-246 and Asp-248. The 46-residue stretch at 441 to 486 (ELLIKEFFEYFGNFAFNKNSINIRQGREQNKPDSSPLYIQNPFETS) folds into the PAP-associated domain. The interval 537 to 585 (PGSGHTSLSRKKKKKPMSEKVKGLLASIKSNSPDSSTDTSGKRTISTQA) is disordered. Residues 564-585 (IKSNSPDSSTDTSGKRTISTQA) show a composition bias toward polar residues.

Belongs to the DNA polymerase type-B-like family. As to quaternary structure, homodimer. Requires Mg(2+) as cofactor. Mn(2+) serves as cofactor.

It is found in the cytoplasm. The protein resides in the mitochondrion. The catalysed reaction is RNA(n) + ATP = RNA(n)-3'-adenine ribonucleotide + diphosphate. Polymerase that creates the 3' poly(A) tail of mitochondrial transcripts. Can use all four nucleotides, but has higher activity with ATP and UTP (in vitro). Plays a role in replication-dependent histone mRNA degradation. May be involved in the terminal uridylation of mature histone mRNAs before their degradation is initiated. Might be responsible for the creation of some UAA stop codons which are not encoded in mtDNA. The protein is Poly(A) RNA polymerase, mitochondrial (Mtpap) of Mus musculus (Mouse).